A 200-amino-acid polypeptide reads, in one-letter code: MNSLYRKAHYQGSAYTLSQLPPDEGMEVAFAGRSNVGKSSAINAITGIGGLARTSKTPGRTQMINFFQLDARRYLVDLPGYGYAKVPEAVKRQWQQTLSAYLEQRRALCGIVLVVDIRRLYQPFDLQMLEWCRSRGLPVRILLTKSDKLKRGAANQALQKATTHLQEVFPMARVQLFSAVNHTGIEAIQAQLDEWLGIGG.

In terms of domain architecture, EngB-type G spans 24-198 (EGMEVAFAGR…QAQLDEWLGI (175 aa)). GTP contacts are provided by residues 32 to 39 (GRSNVGKS), 59 to 63 (GRTQM), 77 to 80 (DLPG), 144 to 147 (TKSD), and 177 to 179 (FSA). Residues Ser39 and Thr61 each contribute to the Mg(2+) site.

It belongs to the TRAFAC class TrmE-Era-EngA-EngB-Septin-like GTPase superfamily. EngB GTPase family. The cofactor is Mg(2+).

Necessary for normal cell division and for the maintenance of normal septation. In Nitrosococcus oceani (strain ATCC 19707 / BCRC 17464 / JCM 30415 / NCIMB 11848 / C-107), this protein is Probable GTP-binding protein EngB.